Here is a 571-residue protein sequence, read N- to C-terminus: Urease subunit alpha (571 aa).

Residues histidine 138, histidine 140, and lysine 221 each coordinate Ni(2+). Residue lysine 221 is modified to N6-carboxylysine. Histidine 223 provides a ligand contact to substrate. Residues histidine 250 and histidine 276 each coordinate Ni(2+). The active-site Proton donor is histidine 324. Aspartate 364 is a Ni(2+) binding site.

Belongs to the metallo-dependent hydrolases superfamily. Urease alpha subunit family. In terms of assembly, heterotrimer of UreA (gamma), UreB (beta) and UreC (alpha) subunits. Three heterotrimers associate to form the active enzyme. Ni cation is required as a cofactor. Carboxylation allows a single lysine to coordinate two nickel ions.

The protein resides in the cytoplasm. It carries out the reaction urea + 2 H2O + H(+) = hydrogencarbonate + 2 NH4(+). Its pathway is nitrogen metabolism; urea degradation; CO(2) and NH(3) from urea (urease route): step 1/1. This is Urease subunit alpha from Staphylococcus aureus (strain JH9).